The following is a 97-amino-acid chain: Carboxypeptidase inhibitor (97 aa).

A signal peptide spans 1 to 22; sequence MAATLPVFAVVFFAMVLASSQA.

It is found in the secreted. Potent competitive inhibitor of metallo-carboxypeptidases CPA1, CPA2, CPB, CPN, and TAF1a. Also inhibits human CPA4. Accelerates fibrinolysis in vitro and may contribute to the maintenance of host blood liquidity during feeding. The protein is Carboxypeptidase inhibitor of Rhipicephalus bursa (Tick).